Here is a 483-residue protein sequence, read N- to C-terminus: tRNA-2-methylthio-N(6)-dimethylallyladenosine synthase (483 aa).

The MTTase N-terminal domain occupies K31 to A148. 6 residues coordinate [4Fe-4S] cluster: C40, C77, C111, C192, C196, and C199. Residues R178–E410 form the Radical SAM core domain. Residues D413 to N477 form the TRAM domain.

This sequence belongs to the methylthiotransferase family. MiaB subfamily. As to quaternary structure, monomer. The cofactor is [4Fe-4S] cluster.

Its subcellular location is the cytoplasm. The catalysed reaction is N(6)-dimethylallyladenosine(37) in tRNA + (sulfur carrier)-SH + AH2 + 2 S-adenosyl-L-methionine = 2-methylsulfanyl-N(6)-dimethylallyladenosine(37) in tRNA + (sulfur carrier)-H + 5'-deoxyadenosine + L-methionine + A + S-adenosyl-L-homocysteine + 2 H(+). Catalyzes the methylthiolation of N6-(dimethylallyl)adenosine (i(6)A), leading to the formation of 2-methylthio-N6-(dimethylallyl)adenosine (ms(2)i(6)A) at position 37 in tRNAs that read codons beginning with uridine. The protein is tRNA-2-methylthio-N(6)-dimethylallyladenosine synthase of Acinetobacter baumannii (strain AB0057).